Reading from the N-terminus, the 69-residue chain is uncharacterized protein (69 aa).

In terms of domain architecture, HTH cro/C1-type spans isoleucine 10–leucine 64. Positions glutamine 21–arginine 40 form a DNA-binding region, H-T-H motif.

This is an uncharacterized protein from Bacillus subtilis (strain 168).